Here is a 188-residue protein sequence, read N- to C-terminus: MKHKVGILGGTFDPPHLAHLHMAEEAKKQLELEKILFLPNKIPPHKHISGMASINERVEMLQLMIEGIDSFEIDTRELMRTGKSYTYDTMRDMIIEQPDTDFYFIIGGDMVEYLPKWYHIDDLVKMVTFVGVNRPLYQPEVPYDVVKIDMPKTTISSTEIRNDIEHAEAFLPEKVWSYIKEHQLYGKK.

It belongs to the NadD family.

It catalyses the reaction nicotinate beta-D-ribonucleotide + ATP + H(+) = deamido-NAD(+) + diphosphate. It functions in the pathway cofactor biosynthesis; NAD(+) biosynthesis; deamido-NAD(+) from nicotinate D-ribonucleotide: step 1/1. Functionally, catalyzes the reversible adenylation of nicotinate mononucleotide (NaMN) to nicotinic acid adenine dinucleotide (NaAD). The sequence is that of Probable nicotinate-nucleotide adenylyltransferase from Listeria monocytogenes serovar 1/2a (strain ATCC BAA-679 / EGD-e).